The following is a 490-amino-acid chain: Tryptophan 5-hydroxylase 2 (490 aa).

Ser-19 is modified (phosphoserine). Residues Leu-31–Gly-42 show a composition bias toward polar residues. The segment at Leu-31–Ala-58 is disordered. A compositionally biased stretch (basic and acidic residues) spans Lys-43–Ala-58. An ACT domain is found at Ala-65–Asn-140. The Fe cation site is built by His-318, His-323, and Glu-363.

Belongs to the biopterin-dependent aromatic amino acid hydroxylase family. As to quaternary structure, interacts with DNAJC12. Fe(2+) is required as a cofactor. Brain specific.

The catalysed reaction is (6R)-L-erythro-5,6,7,8-tetrahydrobiopterin + L-tryptophan + O2 = 5-hydroxy-L-tryptophan + (4aS,6R)-4a-hydroxy-L-erythro-5,6,7,8-tetrahydrobiopterin. The protein operates within aromatic compound metabolism; serotonin biosynthesis; serotonin from L-tryptophan: step 1/2. This chain is Tryptophan 5-hydroxylase 2 (TPH2), found in Homo sapiens (Human).